The sequence spans 252 residues: CLAVATA3/ESR (CLE)-related protein 4A-1 (252 aa).

A signal peptide spans 1–21 (MAKNAMLCLLILRVVLALAFA). Residues 21–83 (ATNKKGDEEP…SNQLPNNNWM (63 aa)) form a required for secretion from the host cytoplasm to the host apoplasm region. N-linked (GlcNAc...) asparagine glycosylation occurs at Asn-32. Positions 116-252 (RKTGMHSQRH…APAGPDPIHH (137 aa)) are disordered. Composition is skewed to basic and acidic residues over residues 125 to 137 (HHEE…EKRV) and 144 to 242 (PIHH…EKRG). Residues 127–135 (EETTLEQEK) form an A-1 repeat. The 6 X approximate repeat A stretch occupies residues 127 to 219 (EETTLEQEKR…HEETTLEQEK (93 aa)). A CLE-1 repeat occupies 136–147 (RVAGAGPDPIHH). The 6 X approximate repeat CLE stretch occupies residues 136 to 252 (RVAGAGPDPI…APAGPDPIHH (117 aa)). The A-2 repeat unit spans residues 148–156 (QDTTLEQEK). The stretch at 157-168 (RAVPAGPDPKHH) is one CLE-2 repeat. An A-3 repeat occupies 169 to 177 (EETTLEQEK). One copy of the CLE-3 repeat lies at 178–189 (RAVPAGPDPKHH). Residues 190-198 (EETTLEQEK) form an A-4 repeat. The CLE-4 repeat unit spans residues 199–210 (RAVPAGPDPKHH). The stretch at 211–219 (EETTLEQEK) is one A-5 repeat. Residues 220 to 231 (RAVPAGPDPKHH) form a CLE-5 repeat. An A-6 repeat occupies 232–240 (EETTFEQEK). The CLE-6 repeat unit spans residues 241–252 (RGAPAGPDPIHH).

Belongs to the CLV3/ESR signal peptide family. As to expression, highly expressed exclusively within the dorsal esophageal gland cell during syncytium formation in host plants.

It is found in the secreted. It localises to the host cytoplasm. The protein localises to the host extracellular space. Its subcellular location is the extracellular space. The protein resides in the apoplast. Mimics host plant CLE extracellular signal peptides that regulate cell fate. May play a role in the differentiation or division of feeding cells (syncytia) induced in plant roots during infection. This is CLAVATA3/ESR (CLE)-related protein 4A-1 (CLE-4A-1) from Globodera rostochiensis (Golden nematode worm).